An 81-amino-acid polypeptide reads, in one-letter code: MSGVTGERPFSDIVTSIRYWVIHSITIPMLFIAGWLFVSTGLAYDVFGTPRPDEYFTQERQELPIIQDRFEAKNQITEFNK.

A helical membrane pass occupies residues 21 to 35; the sequence is VIHSITIPMLFIAGW. Residue His-23 participates in heme binding.

Belongs to the PsbE/PsbF family. Heterodimer of an alpha subunit and a beta subunit. PSII is composed of 1 copy each of membrane proteins PsbA, PsbB, PsbC, PsbD, PsbE, PsbF, PsbH, PsbI, PsbJ, PsbK, PsbL, PsbM, PsbT, PsbX, PsbY, PsbZ, Psb30/Ycf12, peripheral proteins PsbO, CyanoQ (PsbQ), PsbU, PsbV and a large number of cofactors. It forms dimeric complexes. Heme b serves as cofactor.

The protein localises to the cellular thylakoid membrane. Its function is as follows. This b-type cytochrome is tightly associated with the reaction center of photosystem II (PSII). PSII is a light-driven water:plastoquinone oxidoreductase that uses light energy to abstract electrons from H(2)O, generating O(2) and a proton gradient subsequently used for ATP formation. It consists of a core antenna complex that captures photons, and an electron transfer chain that converts photonic excitation into a charge separation. The sequence is that of Cytochrome b559 subunit alpha from Crocosphaera subtropica (strain ATCC 51142 / BH68) (Cyanothece sp. (strain ATCC 51142)).